A 670-amino-acid polypeptide reads, in one-letter code: Microtubule-associated protein ssm4 (670 aa).

A CAP-Gly domain is found at 23–65 (GSTDFESGIWLGVELLNGKGKNDGSVKGKRYFSCEKGKGIFVR). Coiled-coil stretches lie at residues 209–254 (KSEL…KNSI) and 404–582 (VKTR…KLAD). Ser460 is subject to Phosphoserine. Position 606 is a phosphothreonine (Thr606).

It localises to the cytoplasm. The protein localises to the cytoskeleton. The protein resides in the spindle. In terms of biological role, binds to nuclear microtubules with the effect of either modifying their structure or function. This then promotes meiotic nuclear division. This is Microtubule-associated protein ssm4 (ssm4) from Schizosaccharomyces pombe (strain 972 / ATCC 24843) (Fission yeast).